The primary structure comprises 178 residues: Large ribosomal subunit protein uL6 (178 aa).

This sequence belongs to the universal ribosomal protein uL6 family. In terms of assembly, part of the 50S ribosomal subunit.

In terms of biological role, this protein binds to the 23S rRNA, and is important in its secondary structure. It is located near the subunit interface in the base of the L7/L12 stalk, and near the tRNA binding site of the peptidyltransferase center. This Bacillus licheniformis (strain ATCC 14580 / DSM 13 / JCM 2505 / CCUG 7422 / NBRC 12200 / NCIMB 9375 / NCTC 10341 / NRRL NRS-1264 / Gibson 46) protein is Large ribosomal subunit protein uL6.